We begin with the raw amino-acid sequence, 266 residues long: HTH-type transcriptional regulator MurR (266 aa).

The HTH rpiR-type domain maps to Met-1–Ser-77. Positions Ser-37–Gln-56 form a DNA-binding region, H-T-H motif. Residues Ile-128–Gln-266 form the SIS domain.

Homotetramer.

The protein operates within amino-sugar metabolism; N-acetylmuramate degradation [regulation]. Its function is as follows. Represses the expression of the murPQ operon involved in the uptake and degradation of N-acetylmuramic acid (MurNAc). Binds to two adjacent inverted repeats within the operator region. MurNAc 6-phosphate, the substrate of MurQ, is the specific inducer that weakens binding of MurR to the operator. The polypeptide is HTH-type transcriptional regulator MurR (Shigella flexneri serotype 5b (strain 8401)).